The sequence spans 220 residues: 7-cyano-7-deazaguanine synthase (220 aa).

10–20 contacts ATP; the sequence is FSGGQDSTTCL. Zn(2+)-binding residues include C186, C195, C198, and C201.

This sequence belongs to the QueC family. Homodimer. Zn(2+) is required as a cofactor.

It catalyses the reaction 7-carboxy-7-deazaguanine + NH4(+) + ATP = 7-cyano-7-deazaguanine + ADP + phosphate + H2O + H(+). It functions in the pathway purine metabolism; 7-cyano-7-deazaguanine biosynthesis. Its function is as follows. Catalyzes the ATP-dependent conversion of 7-carboxy-7-deazaguanine (CDG) to 7-cyano-7-deazaguanine (preQ(0)). This is 7-cyano-7-deazaguanine synthase from Bacillus cereus (strain B4264).